The following is a 681-amino-acid chain: MKTIYFLISLILIQSIKTLPVLEIASNSQPQDVDSVCSGTLQKTEDVHLMGFTLSGQKVADSPLEASKRWAFRTGVPPKNVEYTEGEEAKTCYNISVTDPSGKSLLLDPPSNIRDYPKCKTVHHIQGQNPHAQGIALHLWGAFFLYDRVASTTMYRGKVFTEGNIAAMIVNKTVHRMIFSRQGQGYRHMNLTSTNKYWTSSNETQRNDTGCFGILQEYNSTNNQTCPPSLKPPSLPTVTPSIHSTNTQINTAKSGTMNPSSDDEDLMISGSGSGEQGPHTTLNVVTEQKQSSTILSTPSLHPSTSQHEQNSTNPSRHAVTEHNGTDPTTQPATLLNNTNTTPTYNTLKYNLSTPSPPTRNITNNDTQRELAESEQTNAQLNTTLDPTENPTTGQDTNSTTNIIMTTSDITSKHPTNSSPDSSPTTRPPIYFRKKRSIFWKEGDIFPFLDGLINTEIDFDPIPNTETIFDESPSFNTSTNEEQHTPPNISLTFSYFPDKNGDTAYSGENENDCDAELRIWSVQEDDLAAGLSWIPFFGPGIEGLYTAGLIKNQNNLVCRLRRLANQTAKSLELLLRVTTEERTFSLINRHAIDFLLTRWGGTCKVLGPDCCIGIEDLSKNISEQIDKIRKDEQKEETGWGLGGKWWTSDWGVLTNLGILLLLSIAVLIALSCICRIFTKYIG.

A signal peptide spans 1–18 (MKTIYFLISLILIQSIKT). The Extracellular portion of the chain corresponds to 19 to 648 (LPVLEIASNS…GLGGKWWTSD (630 aa)). Residues 38-188 (SGTLQKTEDV…FSRQGQGYRH (151 aa)) are receptor-binding. N-linked (GlcNAc...) asparagine; by host glycosylation is found at Asn-94, Asn-171, Asn-190, Asn-202, Asn-207, Asn-219, and Asn-223. The interval 223-428 (NQTCPPSLKP…PDSSPTTRPP (206 aa)) is disordered. 2 stretches are compositionally biased toward polar residues: residues 236-260 (PTVT…MNPS) and 278-315 (PHTT…TNPS). The interval 277–455 (GPHTTLNVVT…PFLDGLINTE (179 aa)) is mucin-like region. Asn-310, Asn-323, Asn-336, Asn-350, Asn-360, Asn-364, Asn-381, Asn-397, Asn-475, and Asn-487 each carry an N-linked (GlcNAc...) asparagine; by host glycan. Over residues 327-347 (PTTQPATLLNNTNTTPTYNTL) the composition is skewed to low complexity. Composition is skewed to polar residues over residues 348–365 (KYNL…TNND) and 373–394 (SEQT…TTGQ). The segment covering 395 to 428 (DTNSTTNIIMTTSDITSKHPTNSSPDSSPTTRPP) has biased composition (low complexity). A fusion peptide region spans residues 529-549 (GLSWIPFFGPGIEGLYTAGLI). 2 N-linked (GlcNAc...) asparagine; by host glycosylation sites follow: Asn-564 and Asn-619. A helical membrane pass occupies residues 649 to 669 (WGVLTNLGILLLLSIAVLIAL). Topologically, residues 670 to 681 (SCICRIFTKYIG) are cytoplasmic. S-palmitoyl cysteine; by host attachment occurs at residues Cys-671 and Cys-673.

It belongs to the filoviruses glycoprotein family. Homotrimer; each monomer consists of a GP1 and a GP2 subunit linked by disulfide bonds. The resulting peplomers (GP1,2) protrude from the virus surface as spikes. GP1,2 interacts with human CD209 and CLEC4M (collectively referred to as DC-SIGN(R)). Asialoglycoprotein receptor (ASGP-R) may be a liver-specific receptor for GP1,2. Members of the Tyro3 receptor tyrosine kinase family may be cell entry factors interacting with GP1,2. N-glycosylated. Post-translationally, O-glycosylated in the mucin-like region. In terms of processing, specific enzymatic cleavages in vivo yield mature proteins. The precursor is processed into GP1 and GP2 by host cell furin in the trans Golgi, and maybe by other host proteases, to yield the mature GP1 and GP2 proteins. The cleavage site corresponds to the furin optimal cleavage sequence [KR]-X-[KR]-R. GP1 is phosphorylated on serine residues between residues 260 and 273.

The protein localises to the virion membrane. The protein resides in the host cell membrane. Functionally, GP1 is responsible for binding to the receptor(s) on target cells. Interacts with CD209/DC-SIGN and CLEC4M/DC-SIGNR which act as cofactors for virus entry into the host cell. Binding to CD209 and CLEC4M, which are respectively found on dendritic cells (DCs), and on endothelial cells of liver sinusoids and lymph node sinuses, facilitate infection of macrophages and endothelial cells. These interactions not only facilitate virus cell entry, but also allow capture of viral particles by DCs and subsequent transmission to susceptible cells without DCs infection (trans infection). Its function is as follows. GP2 acts as a class I viral fusion protein. Under the current model, the protein has at least 3 conformational states: pre-fusion native state, pre-hairpin intermediate state, and post-fusion hairpin state. During viral and target cell membrane fusion, the coiled coil regions (heptad repeats) assume a trimer-of-hairpins structure, positioning the fusion peptide in close proximity to the C-terminal region of the ectodomain. The formation of this structure appears to drive apposition and subsequent fusion of viral and target cell membranes. Responsible for penetration of the virus into the cell cytoplasm by mediating the fusion of the membrane of the endocytosed virus particle with the endosomal membrane. Low pH in endosomes induces an irreversible conformational change in GP2, releasing the fusion hydrophobic peptide. This is Envelope glycoprotein (GP) from Chlorocebus aethiops (Green monkey).